Here is a 325-residue protein sequence, read N- to C-terminus: D-xylose 1-dehydrogenase (NADP(+)) 2 (325 aa).

The signal sequence occupies residues 1-22 (MMFGILGTAGIGVKSVIPAVQA).

Belongs to the Gfo/Idh/MocA family. In terms of assembly, homotetramer.

It is found in the secreted. The catalysed reaction is D-xylose + NADP(+) = D-xylono-1,5-lactone + NADPH + H(+). Its function is as follows. NADP-dependent D-xylose dehydrogenase involved in the degradation of D-xylose, a major component of hemicelluloses such as xylan. Even if it shows D-xylose dehydrogenase activity, it is not essential for D-xylose degradation. In Haloferax volcanii (strain ATCC 29605 / DSM 3757 / JCM 8879 / NBRC 14742 / NCIMB 2012 / VKM B-1768 / DS2) (Halobacterium volcanii), this protein is D-xylose 1-dehydrogenase (NADP(+)) 2.